Reading from the N-terminus, the 149-residue chain is Arginine repressor (149 aa).

This sequence belongs to the ArgR family.

It localises to the cytoplasm. It participates in amino-acid biosynthesis; L-arginine biosynthesis [regulation]. Regulates arginine biosynthesis genes. This chain is Arginine repressor, found in Bacillus pumilus (strain SAFR-032).